The following is an 841-amino-acid chain: DNA ligase (841 aa).

NAD(+) is bound by residues 54 to 58, 103 to 104, and E143; these read DAEYD and SL. K145 functions as the N6-AMP-lysine intermediate in the catalytic mechanism. Residues R166, E203, K321, and K345 each coordinate NAD(+). Zn(2+) contacts are provided by C471, C474, C489, and C495. Residues 554-575 form a disordered region; the sequence is KTVAESDQMPSEGSSVGASGKH. The segment covering 561–570 has biased composition (polar residues); the sequence is QMPSEGSSVG. Residues 764–841 form the BRCT domain; sequence GINKAVAGKT…SEAELLTLLG (78 aa).

It belongs to the NAD-dependent DNA ligase family. LigA subfamily. Mg(2+) serves as cofactor. Mn(2+) is required as a cofactor.

It carries out the reaction NAD(+) + (deoxyribonucleotide)n-3'-hydroxyl + 5'-phospho-(deoxyribonucleotide)m = (deoxyribonucleotide)n+m + AMP + beta-nicotinamide D-nucleotide.. In terms of biological role, DNA ligase that catalyzes the formation of phosphodiester linkages between 5'-phosphoryl and 3'-hydroxyl groups in double-stranded DNA using NAD as a coenzyme and as the energy source for the reaction. It is essential for DNA replication and repair of damaged DNA. The chain is DNA ligase from Neisseria meningitidis serogroup C (strain 053442).